The chain runs to 1192 residues: Homeodomain-interacting protein kinase 3 (1192 aa).

A Glycyl lysine isopeptide (Lys-Gly) (interchain with G-Cter in SUMO); alternate cross-link involves residue K27. K27 is covalently cross-linked (Glycyl lysine isopeptide (Lys-Gly) (interchain with G-Cter in SUMO2); alternate). Residues Y197–V525 enclose the Protein kinase domain. Residues L203–V211 and K226 each bind ATP. D322 serves as the catalytic Proton acceptor. A Phosphotyrosine modification is found at Y359. The segment at Q767–S921 is interaction with AR. The segment at N775 to K868 is interaction with FAS. A disordered region spans residues C799–K829. The segment at Q832–M988 is required for localization to nuclear speckles. The segment at A843 to L895 is SUMO interaction motifs (SIM); required for nuclear localization and kinase activity. Residues I847 to E857 are interaction with UBL1. A compositionally biased stretch (low complexity) spans S889–S906. Disordered regions lie at residues S889–E943 and L956–A1023. Residue K1185 forms a Glycyl lysine isopeptide (Lys-Gly) (interchain with G-Cter in SUMO) linkage.

The protein belongs to the protein kinase superfamily. CMGC Ser/Thr protein kinase family. HIPK subfamily. In terms of assembly, interacts with UBL1/SUMO-1. Interacts with and stabilizes ligand-bound androgen receptor (AR). Interacts with Nkx1-2. Interacts with FAS and DAXX. Probably part of a complex consisting of HIPK3, FAS and FADD. Binds to NR5A1/SF1, SPEN/MINT and RUNX2. In terms of processing, autophosphorylated, but autophosphorylation is not required for catalytic activity. Post-translationally, may be sumoylated. In terms of tissue distribution, heart, skeletal muscle, spleen, testis and lung.

The protein localises to the cytoplasm. It is found in the nucleus. It catalyses the reaction L-seryl-[protein] + ATP = O-phospho-L-seryl-[protein] + ADP + H(+). The enzyme catalyses L-threonyl-[protein] + ATP = O-phospho-L-threonyl-[protein] + ADP + H(+). Functionally, serine/threonine-protein kinase involved in transcription regulation, apoptosis and steroidogenic gene expression. Phosphorylates JUN and RUNX2. Seems to negatively regulate apoptosis by promoting FADD phosphorylation. Enhances androgen receptor-mediated transcription. May act as a transcriptional corepressor for NK homeodomain transcription factors. The phosphorylation of NR5A1 activates SF1 leading to increased steroidogenic gene expression upon cAMP signaling pathway stimulation. In osteoblasts, supports transcription activation: phosphorylates RUNX2 that synergizes with SPEN/MINT to enhance FGFR2-mediated activation of the osteocalcin FGF-responsive element (OCFRE). This is Homeodomain-interacting protein kinase 3 (Hipk3) from Mus musculus (Mouse).